The sequence spans 281 residues: Probable endonuclease 4 (281 aa).

9 residues coordinate Zn(2+): His69, His109, Glu145, Asp179, His182, His216, Asp229, His231, and Glu261.

Belongs to the AP endonuclease 2 family. Requires Zn(2+) as cofactor.

The enzyme catalyses Endonucleolytic cleavage to 5'-phosphooligonucleotide end-products.. Functionally, endonuclease IV plays a role in DNA repair. It cleaves phosphodiester bonds at apurinic or apyrimidinic (AP) sites, generating a 3'-hydroxyl group and a 5'-terminal sugar phosphate. This chain is Probable endonuclease 4, found in Parabacteroides distasonis (strain ATCC 8503 / DSM 20701 / CIP 104284 / JCM 5825 / NCTC 11152).